A 504-amino-acid chain; its full sequence is ATP synthase subunit alpha 2 (504 aa).

An ATP-binding site is contributed by 169–176; that stretch reads GDRQTGKT.

It belongs to the ATPase alpha/beta chains family. F-type ATPases have 2 components, CF(1) - the catalytic core - and CF(0) - the membrane proton channel. CF(1) has five subunits: alpha(3), beta(3), gamma(1), delta(1), epsilon(1). CF(0) has three main subunits: a(1), b(2) and c(9-12). The alpha and beta chains form an alternating ring which encloses part of the gamma chain. CF(1) is attached to CF(0) by a central stalk formed by the gamma and epsilon chains, while a peripheral stalk is formed by the delta and b chains.

It localises to the cell membrane. It carries out the reaction ATP + H2O + 4 H(+)(in) = ADP + phosphate + 5 H(+)(out). Produces ATP from ADP in the presence of a proton gradient across the membrane. The alpha chain is a regulatory subunit. The polypeptide is ATP synthase subunit alpha 2 (Listeria innocua serovar 6a (strain ATCC BAA-680 / CLIP 11262)).